A 480-amino-acid chain; its full sequence is uncharacterized protein (480 aa).

The 77-residue stretch at 131-207 folds into the PUA domain; that stretch reads KKIIKIKNDV…KVVKVRFFIK (77 aa).

In the C-terminal section; belongs to the PAPS reductase family.

This is an uncharacterized protein from Methanocaldococcus jannaschii (strain ATCC 43067 / DSM 2661 / JAL-1 / JCM 10045 / NBRC 100440) (Methanococcus jannaschii).